The chain runs to 213 residues: Succinate dehydrogenase subunit 3-1, mitochondrial (213 aa).

Residues 1–105 (MAATALFRSI…LDVGTSKRLF (105 aa)) constitute a mitochondrion transit peptide. Histidine 130 is a heme binding site. Residues 148–165 (ISGVYLTGVTFAGYLLYL) traverse the membrane as a helical segment.

In terms of assembly, component of complex II composed of eight subunits in plants: four classical SDH subunits SDH1, SDH2, SDH3 and SDH4 (a flavoprotein (FP), an iron-sulfur protein (IP), and a cytochrome b composed of a large and a small subunit.), as well as four subunits unknown in mitochondria from bacteria and heterotrophic eukaryotes. Requires heme as cofactor. Expressed in flowers, inflorescences and stems.

It localises to the mitochondrion inner membrane. It participates in carbohydrate metabolism; tricarboxylic acid cycle. In terms of biological role, membrane-anchoring subunit of succinate dehydrogenase (SDH). The polypeptide is Succinate dehydrogenase subunit 3-1, mitochondrial (Arabidopsis thaliana (Mouse-ear cress)).